The following is a 682-amino-acid chain: MATAALLRSIRRREVVSSPFSAYRCLSSSGKASLNSSYLGQNFRSFSRAFSSKPAGNDVIGIDLGTTNSCVAVMEGKNPKVIENAEGARTTPSVVAFNTKGELLVGTPAKRQAVTNPTNTVSGTKRLIGRKFDDPQTQKEMKMVPYKIVRAPNGDAWVEANGQQYSPSQIGAFILTKMKETAEAYLGKSVTKAVVTVPAYFNDAQRQATKDAGRIAGLDVERIINEPTAAALSYGMTNKEGLIAVFDLGGGTFDVSVLEISNGVFEVKATNGDTFLGGEDFDNALLDFLVNEFKTTEGIDLAKDRLALQRLREAAEKAKIELSSTSQTEINLPFITADASGAKHFNITLTRSRFETLVNHLIERTRDPCKNCLKDAGISAKEVDEVLLVGGMTRVPKVQSIVAEIFGKSPSKGVNPDEAVAMGAALQGGILRGDVKELLLLDVTPLSLGIETLGGVFTRLITRNTTIPTKKSQVFSTAADNQTQVGIRVLQGEREMATDNKLLGEFDLVGIPPSPRGVPQIEVTFDIDANGIVTVSAKDKTTGKVQQITIRSSGGLSEDDIQKMVREAELHAQKDKERKELIDTKNTADTTIYSIEKSLGEYREKIPSEIAKEIEDAVADLRSASSGDDLNEIKAKIEAANKAVSKIGEHMSGGSGGGSAPGGGSEGGSDQAPEAEYEEVKK.

The N-terminal 50 residues, 1-50 (MATAALLRSIRRREVVSSPFSAYRCLSSSGKASLNSSYLGQNFRSFSRAF), are a transit peptide targeting the mitochondrion. The interval 646 to 682 (KIGEHMSGGSGGGSAPGGGSEGGSDQAPEAEYEEVKK) is disordered. Residues 651–667 (MSGGSGGGSAPGGGSEG) show a composition bias toward gly residues. A compositionally biased stretch (acidic residues) spans 673–682 (PEAEYEEVKK).

The protein belongs to the heat shock protein 70 (TC 1.A.33) family. DnaK subfamily.

It is found in the mitochondrion. Functionally, chaperone involved in the maturation of iron-sulfur [Fe-S] cluster-containing proteins. Has a low intrinsic ATPase activity which is markedly stimulated by HSCB and ISU1. In cooperation with other chaperones, Hsp70s are key components that facilitate folding of de novo synthesized proteins, assist translocation of precursor proteins into organelles, and are responsible for degradation of damaged protein under stress conditions. The protein is Heat shock 70 kDa protein 10, mitochondrial of Arabidopsis thaliana (Mouse-ear cress).